The sequence spans 289 residues: UPF0276 protein BP2925 (289 aa).

The protein belongs to the UPF0276 family.

The protein is UPF0276 protein BP2925 of Bordetella pertussis (strain Tohama I / ATCC BAA-589 / NCTC 13251).